The primary structure comprises 841 residues: Probable outer membrane protein pmp2 (841 aa).

Positions 1–24 are cleaved as a signal peptide; it reads MKIPLRFLLISLVPTLSMSNLLGA. An Autotransporter domain is found at 537–841; it reads GAPYEKRFWV…NVDAGSKIKF (305 aa).

Belongs to the PMP outer membrane protein family.

It localises to the secreted. The protein localises to the cell wall. The protein resides in the cell outer membrane. This chain is Probable outer membrane protein pmp2 (pmp2), found in Chlamydia pneumoniae (Chlamydophila pneumoniae).